The following is a 384-amino-acid chain: S-adenosylmethionine synthase (384 aa).

His-15 contacts ATP. Asp-17 contacts Mg(2+). Glu-43 lines the K(+) pocket. L-methionine is bound by residues Glu-56 and Gln-99. A flexible loop region spans residues 99 to 109; sequence QSADINQGVDR. Residues 164–166, 230–231, Asp-239, 245–246, Ala-262, and Lys-266 each bind ATP; these read DAK, RF, and RK. Residue Asp-239 participates in L-methionine binding. Lys-270 is an L-methionine binding site.

Belongs to the AdoMet synthase family. Homotetramer; dimer of dimers. The cofactor is Mg(2+). K(+) is required as a cofactor.

It localises to the cytoplasm. It catalyses the reaction L-methionine + ATP + H2O = S-adenosyl-L-methionine + phosphate + diphosphate. Its pathway is amino-acid biosynthesis; S-adenosyl-L-methionine biosynthesis; S-adenosyl-L-methionine from L-methionine: step 1/1. In terms of biological role, catalyzes the formation of S-adenosylmethionine (AdoMet) from methionine and ATP. The overall synthetic reaction is composed of two sequential steps, AdoMet formation and the subsequent tripolyphosphate hydrolysis which occurs prior to release of AdoMet from the enzyme. This chain is S-adenosylmethionine synthase, found in Haemophilus influenzae (strain ATCC 51907 / DSM 11121 / KW20 / Rd).